A 253-amino-acid polypeptide reads, in one-letter code: Small ribosomal subunit protein uS2 (253 aa).

This sequence belongs to the universal ribosomal protein uS2 family.

This chain is Small ribosomal subunit protein uS2, found in Hahella chejuensis (strain KCTC 2396).